The chain runs to 107 residues: uncharacterized protein (107 aa).

Positions 1-34 (MRLQWPKFITFLSTGSCCLLFLLLPCSFFPLPTA) are cleaved as a signal peptide.

This is an uncharacterized protein from Saccharomyces cerevisiae (strain ATCC 204508 / S288c) (Baker's yeast).